Consider the following 445-residue polypeptide: Phosphoglucosamine mutase (445 aa).

Ser102 serves as the catalytic Phosphoserine intermediate. Residues Ser102, Asp241, Asp243, and Asp245 each coordinate Mg(2+). Residue Ser102 is modified to Phosphoserine.

It belongs to the phosphohexose mutase family. Requires Mg(2+) as cofactor. Activated by phosphorylation.

The enzyme catalyses alpha-D-glucosamine 1-phosphate = D-glucosamine 6-phosphate. Catalyzes the conversion of glucosamine-6-phosphate to glucosamine-1-phosphate. In Shewanella halifaxensis (strain HAW-EB4), this protein is Phosphoglucosamine mutase.